Reading from the N-terminus, the 105-residue chain is MPGVDLNYFIRQANKLTEKIEERKQQLAEESVEAKAGDGRVTVVANGIQEIRSIKIDKEAIDPNDTSMLEDLITAAVNAALASSRQHMQRELAKISGGVKIPGIT.

This sequence belongs to the YbaB/EbfC family. Homodimer.

It localises to the cytoplasm. The protein resides in the nucleoid. Binds to DNA and alters its conformation. May be involved in regulation of gene expression, nucleoid organization and DNA protection. The sequence is that of Nucleoid-associated protein MXAN_1931 from Myxococcus xanthus (strain DK1622).